The primary structure comprises 165 residues: MIAKVSNKSNKSNKKEAVFKRLAENRYAKFQYEISETIEAGIELLGTEVKSIRNGNVNLRDGYCSFRDGEILLLNVHISPHKNVGSFFNHDPLRNRKLLLHKKEIFKLKSNTEKKGLTIIPLSIYLKGSWIKLTIGIGKGKKLHDKRQADKQKDIKREIKTALKR.

This sequence belongs to the SmpB family.

Its subcellular location is the cytoplasm. Required for rescue of stalled ribosomes mediated by trans-translation. Binds to transfer-messenger RNA (tmRNA), required for stable association of tmRNA with ribosomes. tmRNA and SmpB together mimic tRNA shape, replacing the anticodon stem-loop with SmpB. tmRNA is encoded by the ssrA gene; the 2 termini fold to resemble tRNA(Ala) and it encodes a 'tag peptide', a short internal open reading frame. During trans-translation Ala-aminoacylated tmRNA acts like a tRNA, entering the A-site of stalled ribosomes, displacing the stalled mRNA. The ribosome then switches to translate the ORF on the tmRNA; the nascent peptide is terminated with the 'tag peptide' encoded by the tmRNA and targeted for degradation. The ribosome is freed to recommence translation, which seems to be the essential function of trans-translation. This is SsrA-binding protein from Prochlorococcus marinus (strain MIT 9515).